We begin with the raw amino-acid sequence, 171 residues long: Cyclin-dependent kinase inhibitor 2A (171 aa).

Positions 33–42 are enriched in basic and acidic residues; it reads ASMHTKHESE. Positions 33–52 are disordered; the sequence is ASMHTKHESEESFSGEKLTE. ANK repeat units lie at residues 45 to 74, 78 to 106, and 111 to 140; these read FSGE…NPNA, FGRS…EPNT, and TLTL…RLDV.

Belongs to the CDKN2 cyclin-dependent kinase inhibitor family. As to quaternary structure, heterodimer with CDK4 or CDK6. Predominamt P16 complexes contained CDK6. Interacts with CDK4 (both 'T-172'-phosphorylated and non-phosphorylated forms); the interaction inhibits cyclin D-CDK4 kinase activity. Interacts with ISCO2. Expressed predominantly in lung and testis. In the testis, restricted to germ cells in the seminiferous epithelium. Not detected in premeiotic spermatogonia but high levels found in postmeiotic spermatids. In primary tumors, low levels detected in melanocytic hyperplasias. Higher levels found in non-metastatic and metastatic melanomas.

The protein resides in the cytoplasm. It is found in the nucleus. Acts as a negative regulator of the proliferation of normal cells by interacting strongly with CDK4 and CDK6. This inhibits their ability to interact with cyclins D and to phosphorylate the retinoblastoma protein. This is Cyclin-dependent kinase inhibitor 2A from Monodelphis domestica (Gray short-tailed opossum).